The sequence spans 311 residues: MVLNWRFALSADEQRLVREIISAATEFDEVSPVGEQVLRELGYDRTEHLLVTDSRPYAPIIGYLNLSSPRDAGVAMAELVVHPRERRRGVGAAMVRAALAKTGGRNRFWAHGTLASARATASVLGLVPVRELVQMQRSLRTIPDPMVPDQLGVWVRTYVGTVDDAELLRVNNAAFAGHPEQGGWTATQLAERRSEPWFDPAGLFLAFGDSSSNQPGKLLGFHWTKVHAAHPGLGEVYVLGVDPSAQGRGLGQMLTSIGIASLAQRLVGPSAEPTVMLYVESDNVAAARTYERLGFTTYSVDTAYALARIDD.

E35 serves as a coordination point for 1D-myo-inositol 2-(L-cysteinylamino)-2-deoxy-alpha-D-glucopyranoside. Residue 79-81 coordinates acetyl-CoA; sequence LVV. An N-acetyltransferase domain is found at 155–311; that stretch reads VRTYVGTVDD…TAYALARIDD (157 aa). 1D-myo-inositol 2-(L-cysteinylamino)-2-deoxy-alpha-D-glucopyranoside contacts are provided by E180, K225, and E235. Residues 239 to 241 and 246 to 252 contribute to the acetyl-CoA site; these read LGV and QGRGLGQ. Residue Y278 participates in 1D-myo-inositol 2-(L-cysteinylamino)-2-deoxy-alpha-D-glucopyranoside binding. Residue 283 to 288 coordinates acetyl-CoA; it reads NVAAAR.

This sequence belongs to the acetyltransferase family. MshD subfamily. As to quaternary structure, monomer.

It catalyses the reaction 1D-myo-inositol 2-(L-cysteinylamino)-2-deoxy-alpha-D-glucopyranoside + acetyl-CoA = mycothiol + CoA + H(+). In terms of biological role, catalyzes the transfer of acetyl from acetyl-CoA to desacetylmycothiol (Cys-GlcN-Ins) to form mycothiol. This Mycobacterium leprae (strain Br4923) protein is Mycothiol acetyltransferase.